Reading from the N-terminus, the 482-residue chain is Bifunctional protein GlmU (482 aa).

The interval 1–241 (MTASTEAAVV…SALVTGVNDR (241 aa)) is pyrophosphorylase. UDP-N-acetyl-alpha-D-glucosamine contacts are provided by residues 12-15 (LAAG), Lys26, Gln83, 88-89 (GT), 112-114 (SGD), Gly151, Glu166, Asn181, and Asn239. Position 114 (Asp114) interacts with Mg(2+). Asn239 lines the Mg(2+) pocket. Residues 242–262 (VQLSDLGKVLNRRIVAAHQRA) form a linker region. The tract at residues 263–482 (GVTIIDPGST…AARKALGDES (220 aa)) is N-acetyltransferase. UDP-N-acetyl-alpha-D-glucosamine-binding residues include Arg344 and Lys362. The Proton acceptor role is filled by His374. UDP-N-acetyl-alpha-D-glucosamine-binding residues include Tyr377 and Asn388. Acetyl-CoA is bound by residues Ala391, 397-398 (NY), Ser416, and Ala434. Residues 463–482 (KKRPGSAADKAARKALGDES) form a disordered region. Residues 472–482 (KAARKALGDES) are compositionally biased toward basic and acidic residues.

The protein in the N-terminal section; belongs to the N-acetylglucosamine-1-phosphate uridyltransferase family. It in the C-terminal section; belongs to the transferase hexapeptide repeat family. In terms of assembly, homotrimer. Mg(2+) serves as cofactor.

It localises to the cytoplasm. It catalyses the reaction alpha-D-glucosamine 1-phosphate + acetyl-CoA = N-acetyl-alpha-D-glucosamine 1-phosphate + CoA + H(+). The enzyme catalyses N-acetyl-alpha-D-glucosamine 1-phosphate + UTP + H(+) = UDP-N-acetyl-alpha-D-glucosamine + diphosphate. It participates in nucleotide-sugar biosynthesis; UDP-N-acetyl-alpha-D-glucosamine biosynthesis; N-acetyl-alpha-D-glucosamine 1-phosphate from alpha-D-glucosamine 6-phosphate (route II): step 2/2. The protein operates within nucleotide-sugar biosynthesis; UDP-N-acetyl-alpha-D-glucosamine biosynthesis; UDP-N-acetyl-alpha-D-glucosamine from N-acetyl-alpha-D-glucosamine 1-phosphate: step 1/1. It functions in the pathway bacterial outer membrane biogenesis; LPS lipid A biosynthesis. Catalyzes the last two sequential reactions in the de novo biosynthetic pathway for UDP-N-acetylglucosamine (UDP-GlcNAc). The C-terminal domain catalyzes the transfer of acetyl group from acetyl coenzyme A to glucosamine-1-phosphate (GlcN-1-P) to produce N-acetylglucosamine-1-phosphate (GlcNAc-1-P), which is converted into UDP-GlcNAc by the transfer of uridine 5-monophosphate (from uridine 5-triphosphate), a reaction catalyzed by the N-terminal domain. The polypeptide is Bifunctional protein GlmU (Mycolicibacterium smegmatis (strain ATCC 700084 / mc(2)155) (Mycobacterium smegmatis)).